Consider the following 342-residue polypeptide: MANKTEKPTPKKLKDAAKKGQSFKFKDLTTVVIILVGTFTIISFFSLSDVMLLYRYVIINDFEINEGKYFFAVVIVFFKIIGFPLFFCVLSAVLPTLVQTKFVLATKAIKIDFSVLNPVKGLKKIFSIKTIKEFFKSILLLIILALTTYFFWINDRKIIFSQVFSSVDGLYLIWGRLFKDIILFFLAFSILVIILDFVIEFILYMKDMMMDKQEIKREYIEQEGHFETKSRRRELHIEILSEQTKSDIRNSKLVVMNPTHIAIGIYFNPEIAPAPFISLIETNQCALAVRKYANEVGIPTVRDVKLARKLYKTHTKYSFVDFEHLDEVLRLIVWLEQVENTH.

A run of 6 helical transmembrane segments spans residues 28–48 (LTTV…FSLS), 70–90 (FFAV…FCVL), 133–153 (EFFK…FFWI), 158–178 (IIFS…GRLF), 181–201 (IILF…VIEF), and 260–280 (HIAI…ISLI).

It belongs to the type III secretion exporter family.

The protein resides in the cell inner membrane. In terms of biological role, required for surface presentation of invasion plasmid antigens. Could play a role in preserving the translocation competence of the ipa antigens. Required for invasion and for secretion of the three ipa proteins. The polypeptide is Surface presentation of antigens protein SpaS (spaS) (Shigella flexneri).